Here is a 339-residue protein sequence, read N- to C-terminus: Anthranilate phosphoribosyltransferase (339 aa).

5-phospho-alpha-D-ribose 1-diphosphate-binding positions include Gly79, 82-83 (GD), Ser87, 89-92 (NIST), 107-115 (KHGNRSVSS), and Ser119. Residue Gly79 participates in anthranilate binding. Residue Ser91 coordinates Mg(2+). An anthranilate-binding site is contributed by Asn110. Arg165 serves as a coordination point for anthranilate. Positions 224 and 225 each coordinate Mg(2+).

Belongs to the anthranilate phosphoribosyltransferase family. Homodimer. The cofactor is Mg(2+).

The enzyme catalyses N-(5-phospho-beta-D-ribosyl)anthranilate + diphosphate = 5-phospho-alpha-D-ribose 1-diphosphate + anthranilate. It participates in amino-acid biosynthesis; L-tryptophan biosynthesis; L-tryptophan from chorismate: step 2/5. Catalyzes the transfer of the phosphoribosyl group of 5-phosphorylribose-1-pyrophosphate (PRPP) to anthranilate to yield N-(5'-phosphoribosyl)-anthranilate (PRA). The polypeptide is Anthranilate phosphoribosyltransferase (Exiguobacterium sibiricum (strain DSM 17290 / CCUG 55495 / CIP 109462 / JCM 13490 / 255-15)).